Reading from the N-terminus, the 348-residue chain is tRNA N6-adenosine threonylcarbamoyltransferase (348 aa).

Histidine 115 and histidine 119 together coordinate Fe cation. Substrate-binding positions include 138-142 (LVSGG), aspartate 171, glycine 184, and asparagine 278. Aspartate 306 is a Fe cation binding site.

This sequence belongs to the KAE1 / TsaD family. It depends on Fe(2+) as a cofactor.

The protein localises to the cytoplasm. The enzyme catalyses L-threonylcarbamoyladenylate + adenosine(37) in tRNA = N(6)-L-threonylcarbamoyladenosine(37) in tRNA + AMP + H(+). Its function is as follows. Required for the formation of a threonylcarbamoyl group on adenosine at position 37 (t(6)A37) in tRNAs that read codons beginning with adenine. Is involved in the transfer of the threonylcarbamoyl moiety of threonylcarbamoyl-AMP (TC-AMP) to the N6 group of A37, together with TsaE and TsaB. TsaD likely plays a direct catalytic role in this reaction. This chain is tRNA N6-adenosine threonylcarbamoyltransferase, found in Methylibium petroleiphilum (strain ATCC BAA-1232 / LMG 22953 / PM1).